Reading from the N-terminus, the 473-residue chain is H(+)/Cl(-) exchange transporter ClcA (473 aa).

Over 1–32 the chain is Cytoplasmic; that stretch reads MKTDTSTFLAQQIVRLRRRDQIRRLMQRDKTP. The helical transmembrane segment at 33–69 threads the bilayer; it reads LAILFMAAVVGTLTGLVGVAFEKAVSWVQNMRIGALV. The Periplasmic segment spans residues 70-76; the sequence is QVADHAF. Residues 77-100 traverse the membrane as a helical segment; it reads LLWPLAFILSALLAMVGYFLVRKF. Residues 106 to 110 carry the Selectivity filter part_1 motif; it reads GSGIP. S107 lines the chloride pocket. Positions 109-116 form an intramembrane region, helical; sequence IPEIEGAL. At 117–123 the chain is on the cytoplasmic side; the sequence is EELRPVR. 2 helical membrane passes run 124–141 and 148–166; these read WWRV…TLGA and EGPT…LDVF. A Selectivity filter part_2 motif is present at residues 146 to 150; sequence GREGP. Over 167–176 the chain is Cytoplasmic; that stretch reads RMRSAEARHT. 2 consecutive intramembrane regions (helical) follow at residues 177 to 189 and 193 to 201; these read LLAT…LSAA and PLAGILFII. Residues 202-214 lie on the Cytoplasmic side of the membrane; sequence EEMRPQFRYNLIS. A helical transmembrane segment spans residues 215 to 232; the sequence is IKAVFTGVIMSSIVFRIF. At 233–252 the chain is on the periplasmic side; it reads NGEAPIIEVGKLSDAPVNTL. A helical transmembrane segment spans residues 253-281; the sequence is WLYLILGIIFGCVGPVFNSLVLRTQDMFQ. Over 282-287 the chain is Cytoplasmic; sequence RFHGGE. Residues 288–309 traverse the membrane as a helical segment; that stretch reads IKKWVLMGGAIGGLCGILGLIE. Residues 310-329 are Periplasmic-facing; the sequence is PEAAGGGFNLIPIAAAGNFS. Helical transmembrane passes span 330 to 349 and 355 to 376; these read VGLL…LCFS and GIFA…MAAA. Positions 355 to 359 match the Selectivity filter part_3 motif; that stretch reads GIFAP. I356 and F357 together coordinate chloride. The Periplasmic portion of the chain corresponds to 377–386; sequence VLFPQYHLEA. Positions 387 to 401 form an intramembrane region, helical; that stretch reads GTFAIAGMGALMAAS. The note=Loop between two helices intramembrane region spans 402–404; the sequence is VRA. Positions 405–416 form an intramembrane region, helical; the sequence is PLTGIVLVLEMT. An intramembrane region (note=Loop between two helices) is located at residues 417 to 421; that stretch reads DNYQL. The helical transmembrane segment at 422–438 threads the bilayer; sequence ILPMIITCLGATLLAQF. Residues 439–473 are Cytoplasmic-facing; the sequence is LGGKPLYSTILARTLAKQDAEQAAKNQNAPAGENT. Y445 contributes to the chloride binding site.

Belongs to the chloride channel (TC 2.A.49) family. ClcA subfamily. In terms of assembly, homodimer.

It is found in the cell inner membrane. It catalyses the reaction 2 chloride(in) + H(+)(out) = 2 chloride(out) + H(+)(in). Proton-coupled chloride transporter. Functions as antiport system and exchanges two chloride ions for 1 proton. Probably acts as an electrical shunt for an outwardly-directed proton pump that is linked to amino acid decarboxylation, as part of the extreme acid resistance (XAR) response. The protein is H(+)/Cl(-) exchange transporter ClcA of Salmonella agona (strain SL483).